Here is a 100-residue protein sequence, read N- to C-terminus: Urease subunit gamma (100 aa).

It belongs to the urease gamma subunit family. As to quaternary structure, heterotrimer of UreA (gamma), UreB (beta) and UreC (alpha) subunits. Three heterotrimers associate to form the active enzyme.

It is found in the cytoplasm. It catalyses the reaction urea + 2 H2O + H(+) = hydrogencarbonate + 2 NH4(+). It functions in the pathway nitrogen metabolism; urea degradation; CO(2) and NH(3) from urea (urease route): step 1/1. This is Urease subunit gamma from Pseudoalteromonas translucida (strain TAC 125).